Here is a 322-residue protein sequence, read N- to C-terminus: Sideroflexin-1 (322 aa).

Position 2 is an N-acetylserine (Ser2). Residues 2 to 102 (SGELPPNINI…MSAQVPMNMT (101 aa)) lie on the Mitochondrial matrix side of the membrane. Residues 103–120 (ITGCMMTFYRTTPAVLFW) form a helical membrane-spanning segment. Topologically, residues 121–146 (QWINQSFNAVVNYTNRSGDAPLTVNE) are mitochondrial intermembrane. Residues 147–167 (LGTAYVSATTGAVATALGLNA) traverse the membrane as a helical segment. At 168-174 (LTKHVSP) the chain is on the mitochondrial matrix side. Residues 175–195 (LIGRFVPFAAVAAANCINIPL) traverse the membrane as a helical segment. Residues 196-228 (MRQRELRAGIPVTDENGNRLGESANAAKQAITQ) are Mitochondrial intermembrane-facing. The chain crosses the membrane as a helical span at residues 229–249 (VVISRILMAAPGMAIPPFIMN). The Mitochondrial matrix portion of the chain corresponds to 250–266 (TLEKKAFLKRFPWMSAP). A helical transmembrane segment spans residues 267 to 287 (IQVGLVGFCLVFATPLCCALF). Topologically, residues 288–322 (PQKSSMSVTSLEAELQAKIRETSPELRRVYFNKGL) are mitochondrial intermembrane.

This sequence belongs to the sideroflexin family.

The protein resides in the mitochondrion inner membrane. It carries out the reaction L-serine(in) = L-serine(out). The catalysed reaction is L-alanine(in) = L-alanine(out). It catalyses the reaction L-cysteine(in) = L-cysteine(out). Its function is as follows. Amino acid transporter importing serine, an essential substrate of the mitochondrial branch of the one-carbon pathway, into mitochondria. Mitochondrial serine is then converted to glycine and formate, which exits to the cytosol where it is used to generate the charged folates that serve as one-carbon donors. May also transport other amino acids including alanine and cysteine. The chain is Sideroflexin-1 (SFXN1) from Sus scrofa (Pig).